A 152-amino-acid polypeptide reads, in one-letter code: Prostaglandin E synthase (152 aa).

Over methionine 1–alanine 12 the chain is Lumenal. The helical transmembrane segment at leucine 13–lysine 41 threads the bilayer. Arginine 38 lines the glutathione pocket. Over lysine 42 to arginine 60 the chain is Cytoplasmic. The chain crosses the membrane as a helical span at residues serine 61–serine 90. Arginine 73–glutamate 77 is a glutathione binding site. Over phenylalanine 91–asparagine 95 the chain is Lumenal. Residues proline 96 to glycine 119 form a helical membrane-spanning segment. Histidine 113 and tyrosine 117 together coordinate glutathione. Over lysine 120–alanine 123 the chain is Cytoplasmic. The chain crosses the membrane as a helical span at residues proline 124–leucine 152. Residue arginine 126 to tyrosine 130 coordinates glutathione.

Belongs to the MAPEG family. As to quaternary structure, homotrimer. Glutathione serves as cofactor.

It localises to the membrane. The protein resides in the cytoplasm. The protein localises to the perinuclear region. It catalyses the reaction prostaglandin H2 = prostaglandin E2. The catalysed reaction is 2-glyceryl-prostaglandin H2 = 2-glyceryl-prostaglandin E2. It carries out the reaction prostaglandin G2 = (15S)-15-hydroperoxy-prostaglandin E2. The enzyme catalyses 1-chloro-2,4-dinitrobenzene + glutathione = 2,4-dinitrophenyl-S-glutathione + chloride + H(+). It catalyses the reaction (5S)-hydroperoxy-(6E,8Z,11Z,14Z)-eicosatetraenoate + 2 glutathione = (5S)-hydroxy-(6E,8Z,11Z,14Z)-eicosatetraenoate + glutathione disulfide + H2O. It participates in lipid metabolism; prostaglandin biosynthesis. Induced by interleukin IL1B. Terminal enzyme of the cyclooxygenase (COX)-2-mediated prostaglandin E2 (PGE2) biosynthetic pathway. Catalyzes the glutathione-dependent oxidoreduction of prostaglandin endoperoxide H2 (PGH2) to prostaglandin E2 (PGE2) in response to inflammatory stimuli. Plays a key role in inflammation response, fever and pain. Also catalyzes the oxidoreduction of endocannabinoids into prostaglandin glycerol esters and PGG2 into 15-hydroperoxy-PGE2. In addition, displays low glutathione transferase and glutathione-dependent peroxidase activities, toward 1-chloro-2,4-dinitrobenzene and 5-hydroperoxyicosatetraenoic acid (5-HPETE), respectively. The sequence is that of Prostaglandin E synthase (PTGES) from Homo sapiens (Human).